The following is a 546-amino-acid chain: Chaperonin GroEL (546 aa).

Residues 29–32, 86–90, G413, 476–478, and D492 contribute to the ATP site; these read TLGP, DGTTT, and NAA. The segment at 521 to 546 is disordered; the sequence is RPDESGNDAGAGAQGMDPSMMGGGMM.

This sequence belongs to the chaperonin (HSP60) family. Forms a cylinder of 14 subunits composed of two heptameric rings stacked back-to-back. Interacts with the co-chaperonin GroES.

The protein resides in the cytoplasm. The catalysed reaction is ATP + H2O + a folded polypeptide = ADP + phosphate + an unfolded polypeptide.. Functionally, together with its co-chaperonin GroES, plays an essential role in assisting protein folding. The GroEL-GroES system forms a nano-cage that allows encapsulation of the non-native substrate proteins and provides a physical environment optimized to promote and accelerate protein folding. The protein is Chaperonin GroEL of Tetragenococcus halophilus (Pediococcus halophilus).